A 464-amino-acid polypeptide reads, in one-letter code: Sensor protein IrlS (464 aa).

The Periplasmic portion of the chain corresponds to 1-13 (MIRRLLPRTLRAR). A helical membrane pass occupies residues 14 to 34 (LTALIILSTAATLALSGVALY). The Cytoplasmic segment spans residues 35–166 (SALHNRLVGM…DHALLRAYAY (132 aa)). A helical transmembrane segment spans residues 167–187 (TVVVIEVLAVVLTAALAYGIA). The region spanning 188–241 (MLGLSPLRRLVARAEQMSSSRLAQPLPELDTSGELKEMEHAFNAMLKRLDESFV) is the HAMP domain. Topologically, residues 188-464 (MLGLSPLRRL…FWLKFPAHAA (277 aa)) are periplasmic. In terms of domain architecture, Histidine kinase spans 249–463 (NLAHDMRTPL…TFWLKFPAHA (215 aa)). Position 252 is a phosphohistidine; by autocatalysis (histidine 252).

It is found in the cell inner membrane. It carries out the reaction ATP + protein L-histidine = ADP + protein N-phospho-L-histidine.. Member of the two-component regulatory system IrlR/IrlS. May be involved in invasion of eukaryotic cells and heavy-metal resistance. Probably activates IrlR by phosphorylation. The protein is Sensor protein IrlS (irlS) of Burkholderia pseudomallei (strain K96243).